A 368-amino-acid polypeptide reads, in one-letter code: tRNA N6-adenosine threonylcarbamoyltransferase (368 aa).

Residues His108 and His112 each contribute to the Fe cation site. Substrate is bound by residues 149–153 (LVSGG), Asp183, Gly196, Asp200, and Asn301. Asp329 is a Fe cation binding site.

Belongs to the KAE1 / TsaD family. It depends on Fe(2+) as a cofactor.

The protein localises to the cytoplasm. It carries out the reaction L-threonylcarbamoyladenylate + adenosine(37) in tRNA = N(6)-L-threonylcarbamoyladenosine(37) in tRNA + AMP + H(+). In terms of biological role, required for the formation of a threonylcarbamoyl group on adenosine at position 37 (t(6)A37) in tRNAs that read codons beginning with adenine. Is involved in the transfer of the threonylcarbamoyl moiety of threonylcarbamoyl-AMP (TC-AMP) to the N6 group of A37, together with TsaE and TsaB. TsaD likely plays a direct catalytic role in this reaction. This chain is tRNA N6-adenosine threonylcarbamoyltransferase, found in Paenarthrobacter aurescens (strain TC1).